The following is a 75-amino-acid chain: Small ribosomal subunit protein eS17 (75 aa).

The protein belongs to the eukaryotic ribosomal protein eS17 family.

This Thermoplasma volcanium (strain ATCC 51530 / DSM 4299 / JCM 9571 / NBRC 15438 / GSS1) protein is Small ribosomal subunit protein eS17.